Here is a 225-residue protein sequence, read N- to C-terminus: Holliday junction branch migration complex subunit RuvA (225 aa).

The segment at 1-68 is domain I; that stretch reads MIGWLQGQKV…DDGSSLFGFP (68 aa). The domain II stretch occupies residues 69 to 147; it reads ERRERDMFRT…EFSCRDPGMS (79 aa). Residues 148-158 are flexible linker; sequence LVDNGVIDSHQ. The domain III stretch occupies residues 159 to 225; it reads LKDSSLHELQ…SLRWLSQEAA (67 aa).

It belongs to the RuvA family. Homotetramer. Forms an RuvA(8)-RuvB(12)-Holliday junction (HJ) complex. HJ DNA is sandwiched between 2 RuvA tetramers; dsDNA enters through RuvA and exits via RuvB. An RuvB hexamer assembles on each DNA strand where it exits the tetramer. Each RuvB hexamer is contacted by two RuvA subunits (via domain III) on 2 adjacent RuvB subunits; this complex drives branch migration. In the full resolvosome a probable DNA-RuvA(4)-RuvB(12)-RuvC(2) complex forms which resolves the HJ.

It is found in the cytoplasm. In terms of biological role, the RuvA-RuvB-RuvC complex processes Holliday junction (HJ) DNA during genetic recombination and DNA repair, while the RuvA-RuvB complex plays an important role in the rescue of blocked DNA replication forks via replication fork reversal (RFR). RuvA specifically binds to HJ cruciform DNA, conferring on it an open structure. The RuvB hexamer acts as an ATP-dependent pump, pulling dsDNA into and through the RuvAB complex. HJ branch migration allows RuvC to scan DNA until it finds its consensus sequence, where it cleaves and resolves the cruciform DNA. The chain is Holliday junction branch migration complex subunit RuvA from Prochlorococcus marinus (strain MIT 9313).